Consider the following 349-residue polypeptide: MAPCVAGWLGGFLLVPALGMIPPPEKVRMNSVNFKNILQWEVPAFPKTNLTFTAQYESYRSFQDHCKRTASTQCDFSHLSKYGDYTVRVRAELADEHSEWVNVTFCPVEDTIIGPPEMQIESLAESLHLRFSAPQIENEPETWTLKNIYDSWAYRVQYWKNGTNEKFQVVSPYDSEVLRNLEPWTTYCIQVQGFLLDQNRTGEWSEPICERTGNDEITPSWIVAIILIVSVLVVFLFLLGCFVVLWLIYKKTKHTFRSGTSLPQHLKEFLGHPHHSTFLLFSFPPPEEAEVFDKLSIISEESEGSKQSPEDNCASEPPSDPGPRELESKDEAPSPPHDDPKLLTSTSEV.

Positions 1–19 (MAPCVAGWLGGFLLVPALG) are cleaved as a signal peptide. Residues 20-220 (MIPPPEKVRM…RTGNDEITPS (201 aa)) are Extracellular-facing. Fibronectin type-III domains are found at residues 23 to 111 (PPEK…VEDT) and 112 to 215 (IIGP…TGND). An N-linked (GlcNAc...) asparagine glycan is attached at Asn-49. An intrachain disulfide couples Cys-66 to Cys-74. 3 N-linked (GlcNAc...) asparagine glycosylation sites follow: Asn-102, Asn-161, and Asn-199. Cys-188 and Cys-209 are disulfide-bonded. The helical transmembrane segment at 221 to 241 (WIVAIILIVSVLVVFLFLLGC) threads the bilayer. At 242–349 (FVVLWLIYKK…PKLLTSTSEV (108 aa)) the chain is on the cytoplasmic side. At Ser-299 the chain carries Phosphoserine. Residues 300 to 349 (EESEGSKQSPEDNCASEPPSDPGPRELESKDEAPSPPHDDPKLLTSTSEV) are disordered. Basic and acidic residues predominate over residues 322-341 (GPRELESKDEAPSPPHDDPK).

Belongs to the type II cytokine receptor family. As to quaternary structure, heterodimer with IFNLR1.

It is found in the membrane. In terms of biological role, shared cell surface receptor required for the activation of five class 2 cytokines: IL10, IL22, IL26, IL28, and IFNL1. The IFNLR1/IL10RB dimer is a receptor for the cytokine ligands IFNL2 and IFNL3 and mediates their antiviral activity. The ligand/receptor complex stimulate the activation of the JAK/STAT signaling pathway leading to the expression of IFN-stimulated genes (ISG), which contribute to the antiviral state. The polypeptide is Interleukin-10 receptor subunit beta (Il10rb) (Mus musculus (Mouse)).